Reading from the N-terminus, the 772-residue chain is Ion-translocating oxidoreductase complex subunit C (772 aa).

4Fe-4S ferredoxin-type domains lie at 369 to 397 (GEPQ…QQLY) and 407 to 436 (KATT…VQYF). 8 residues coordinate [4Fe-4S] cluster: Cys377, Cys380, Cys383, Cys387, Cys416, Cys419, Cys422, and Cys426. 3 disordered regions span residues 602-684 (KLEQ…DPRK), 696-717 (ARKL…PRKA), and 727-746 (KARK…QVDP). Residues 605–615 (QQQANAEPEQQ) are compositionally biased toward low complexity.

This sequence belongs to the 4Fe4S bacterial-type ferredoxin family. RnfC subfamily. The complex is composed of six subunits: RsxA, RsxB, RsxC, RsxD, RsxE and RsxG. Requires [4Fe-4S] cluster as cofactor.

Its subcellular location is the cell inner membrane. In terms of biological role, part of a membrane-bound complex that couples electron transfer with translocation of ions across the membrane. Required to maintain the reduced state of SoxR. This chain is Ion-translocating oxidoreductase complex subunit C, found in Escherichia coli O157:H7 (strain EC4115 / EHEC).